Here is an 84-residue protein sequence, read N- to C-terminus: UPF0291 protein EUBELI_00985 (84 aa).

It belongs to the UPF0291 family.

The protein localises to the cytoplasm. The polypeptide is UPF0291 protein EUBELI_00985 (Lachnospira eligens (strain ATCC 27750 / DSM 3376 / VPI C15-48 / C15-B4) (Eubacterium eligens)).